The primary structure comprises 151 residues: Small ribosomal subunit protein uS13 (151 aa).

The protein belongs to the universal ribosomal protein uS13 family. In terms of assembly, part of the 30S ribosomal subunit. Forms a loose heterodimer with protein S19. Forms two bridges to the 50S subunit in the 70S ribosome.

Its function is as follows. Located at the top of the head of the 30S subunit, it contacts several helices of the 16S rRNA. In the 70S ribosome it contacts the 23S rRNA (bridge B1a) and protein L5 of the 50S subunit (bridge B1b), connecting the 2 subunits; these bridges are implicated in subunit movement. In Hyperthermus butylicus (strain DSM 5456 / JCM 9403 / PLM1-5), this protein is Small ribosomal subunit protein uS13.